The sequence spans 274 residues: Large ribosomal subunit protein uL2cz/uL2cy (274 aa).

Disordered stretches follow at residues 1-22 (MAIH…DSQV) and 225-274 (PVDH…RRSK).

This sequence belongs to the universal ribosomal protein uL2 family. As to quaternary structure, part of the 50S ribosomal subunit.

The protein localises to the plastid. The protein resides in the chloroplast. The polypeptide is Large ribosomal subunit protein uL2cz/uL2cy (rpl2-A) (Arabis hirsuta (Hairy rock-cress)).